A 180-amino-acid chain; its full sequence is Trafficking protein particle complex subunit 3 (180 aa).

Cysteine 68 carries S-palmitoyl cysteine lipidation.

It belongs to the TRAPP small subunits family. BET3 subfamily. In terms of assembly, homodimer. Component of the multisubunit transport protein particle (TRAPP) complex, which includes at least TRAPPC2, TRAPPC2L, TRAPPC3, TRAPPC3L, TRAPPC4, TRAPPC5, TRAPPC8, TRAPPC9, TRAPPC10, TRAPPC11 and TRAPPC12. Heterodimer with TRAPPC6A. The heterodimer TRAPPC3-TRAPPC6A interacts with TRAPPC2L. Heterodimer with TRAPPC6b. The heterodimer TRAPPC6B-TRAPPC3 interacts with TRAPPC1 likely providing a core for TRAPP complex formation. Widely expressed. Expressed in lung, heart, liver, spleen, brain and kidney.

The protein localises to the golgi apparatus. It is found in the cis-Golgi network. The protein resides in the endoplasmic reticulum. Functionally, may play a role in vesicular transport from endoplasmic reticulum to Golgi. In Mus musculus (Mouse), this protein is Trafficking protein particle complex subunit 3.